The sequence spans 211 residues: ATP phosphoribosyltransferase (211 aa).

This sequence belongs to the ATP phosphoribosyltransferase family. Short subfamily. In terms of assembly, heteromultimer composed of HisG and HisZ subunits.

Its subcellular location is the cytoplasm. It catalyses the reaction 1-(5-phospho-beta-D-ribosyl)-ATP + diphosphate = 5-phospho-alpha-D-ribose 1-diphosphate + ATP. The protein operates within amino-acid biosynthesis; L-histidine biosynthesis; L-histidine from 5-phospho-alpha-D-ribose 1-diphosphate: step 1/9. Catalyzes the condensation of ATP and 5-phosphoribose 1-diphosphate to form N'-(5'-phosphoribosyl)-ATP (PR-ATP). Has a crucial role in the pathway because the rate of histidine biosynthesis seems to be controlled primarily by regulation of HisG enzymatic activity. This Rippkaea orientalis (strain PCC 8801 / RF-1) (Cyanothece sp. (strain PCC 8801)) protein is ATP phosphoribosyltransferase.